The chain runs to 165 residues: Ribosome maturation factor RimM (165 aa).

In terms of domain architecture, PRC barrel spans 89 to 161 (EADTHYVVDL…KIVIKPVRQW (73 aa)).

The protein belongs to the RimM family. Binds ribosomal protein uS19.

The protein resides in the cytoplasm. In terms of biological role, an accessory protein needed during the final step in the assembly of 30S ribosomal subunit, possibly for assembly of the head region. Essential for efficient processing of 16S rRNA. May be needed both before and after RbfA during the maturation of 16S rRNA. It has affinity for free ribosomal 30S subunits but not for 70S ribosomes. The protein is Ribosome maturation factor RimM of Clostridium botulinum (strain Eklund 17B / Type B).